A 169-amino-acid polypeptide reads, in one-letter code: MADPARAAKLAQRIKVVVAEALGRKVKDPRLEGITVTDARVTNDLQHATIYYTVFGDQVVQADAAKGLEKAKGVLRQEVGRNITVRLTPTLEFVADQIPVNASNLEELLRAAKKRDAEVAALAAGAKHAGDADPYKSDIPEDVEIDEDDFDEEDEDLIDDEELDEDGNK.

The segment at 124–169 (AGAKHAGDADPYKSDIPEDVEIDEDDFDEEDEDLIDDEELDEDGNK) is disordered. Residues 128 to 139 (HAGDADPYKSDI) show a composition bias toward basic and acidic residues. The segment covering 140–169 (PEDVEIDEDDFDEEDEDLIDDEELDEDGNK) has biased composition (acidic residues).

It belongs to the RbfA family. In terms of assembly, monomer. Binds 30S ribosomal subunits, but not 50S ribosomal subunits or 70S ribosomes.

It localises to the cytoplasm. Its function is as follows. One of several proteins that assist in the late maturation steps of the functional core of the 30S ribosomal subunit. Associates with free 30S ribosomal subunits (but not with 30S subunits that are part of 70S ribosomes or polysomes). Required for efficient processing of 16S rRNA. May interact with the 5'-terminal helix region of 16S rRNA. The chain is Ribosome-binding factor A from Arthrobacter sp. (strain FB24).